Consider the following 425-residue polypeptide: Serine--tRNA ligase (425 aa).

Position 229 to 231 (229 to 231) interacts with L-serine; that stretch reads TSE. ATP contacts are provided by residues 259-261 and V275; that span reads RKE. Position 282 (E282) interacts with L-serine. An ATP-binding site is contributed by 349-352; the sequence is EITS. T384 contributes to the L-serine binding site.

Belongs to the class-II aminoacyl-tRNA synthetase family. Type-1 seryl-tRNA synthetase subfamily. As to quaternary structure, homodimer. The tRNA molecule binds across the dimer.

It is found in the cytoplasm. The enzyme catalyses tRNA(Ser) + L-serine + ATP = L-seryl-tRNA(Ser) + AMP + diphosphate + H(+). The catalysed reaction is tRNA(Sec) + L-serine + ATP = L-seryl-tRNA(Sec) + AMP + diphosphate + H(+). The protein operates within aminoacyl-tRNA biosynthesis; selenocysteinyl-tRNA(Sec) biosynthesis; L-seryl-tRNA(Sec) from L-serine and tRNA(Sec): step 1/1. Catalyzes the attachment of serine to tRNA(Ser). Is also able to aminoacylate tRNA(Sec) with serine, to form the misacylated tRNA L-seryl-tRNA(Sec), which will be further converted into selenocysteinyl-tRNA(Sec). This is Serine--tRNA ligase from Borreliella afzelii (strain PKo) (Borrelia afzelii).